Consider the following 198-residue polypeptide: Probable minor pilin MMP0709 (198 aa).

Residues 1–5 (MSNRG) constitute a propeptide that is removed on maturation. The QXSXEXXXL motif lies at 6–14 (QLSIEMVIL).

The N-terminus is probably cleaved by the prepilin peptidase EppA, which recognizes the class III signal sequence.

Its subcellular location is the secreted. The protein localises to the cell surface. It localises to the fimbrium. The polypeptide is Probable minor pilin MMP0709 (Methanococcus maripaludis (strain DSM 14266 / JCM 13030 / NBRC 101832 / S2 / LL)).